The chain runs to 331 residues: D-alanine--D-alanine ligase (331 aa).

Residues K121–R327 form the ATP-grasp domain. A151 to E206 is an ATP binding site. Mg(2+)-binding residues include D281, E294, and N296.

It belongs to the D-alanine--D-alanine ligase family. Requires Mg(2+) as cofactor. Mn(2+) serves as cofactor.

It localises to the cytoplasm. It catalyses the reaction 2 D-alanine + ATP = D-alanyl-D-alanine + ADP + phosphate + H(+). The protein operates within cell wall biogenesis; peptidoglycan biosynthesis. In terms of biological role, cell wall formation. This Vibrio atlanticus (strain LGP32) (Vibrio splendidus (strain Mel32)) protein is D-alanine--D-alanine ligase.